Here is a 325-residue protein sequence, read N- to C-terminus: Phospho-N-acetylmuramoyl-pentapeptide-transferase (325 aa).

Helical transmembrane passes span 9–29, 53–73, 77–97, 112–132, 154–174, 182–202, 204–224, 231–251, 257–277, and 305–325; these read ALLV…PWLL, TMGG…FQAF, TLLL…DDYL, KLLG…AFLG, LGNV…ANAV, GLCS…SLAL, EKGL…FLVY, VFMG…FAVL, FLLL…IQVI, and KIVL…GYGL.

It belongs to the glycosyltransferase 4 family. MraY subfamily. Mg(2+) serves as cofactor.

It is found in the cell membrane. The catalysed reaction is UDP-N-acetyl-alpha-D-muramoyl-L-alanyl-gamma-D-glutamyl-meso-2,6-diaminopimeloyl-D-alanyl-D-alanine + di-trans,octa-cis-undecaprenyl phosphate = di-trans,octa-cis-undecaprenyl diphospho-N-acetyl-alpha-D-muramoyl-L-alanyl-D-glutamyl-meso-2,6-diaminopimeloyl-D-alanyl-D-alanine + UMP. It functions in the pathway cell wall biogenesis; peptidoglycan biosynthesis. Its function is as follows. Catalyzes the initial step of the lipid cycle reactions in the biosynthesis of the cell wall peptidoglycan: transfers peptidoglycan precursor phospho-MurNAc-pentapeptide from UDP-MurNAc-pentapeptide onto the lipid carrier undecaprenyl phosphate, yielding undecaprenyl-pyrophosphoryl-MurNAc-pentapeptide, known as lipid I. This is Phospho-N-acetylmuramoyl-pentapeptide-transferase from Carboxydothermus hydrogenoformans (strain ATCC BAA-161 / DSM 6008 / Z-2901).